The primary structure comprises 997 residues: Serine-repeat antigen protein 5 (997 aa).

A signal peptide spans 1–22 (MKSYISLFFILCVIFNKNVIKC). Disordered regions lie at residues 26 to 107 (SQTG…EKQD) and 181 to 252 (LPSN…PRNL). The span at 30–51 (NTGGGQAGNTGGDQAGSTGGSP) shows a compositional bias: gly residues. Over residues 52–67 (QGSTGASPQGSTGASP) the composition is skewed to low complexity. A compositionally biased stretch (polar residues) spans 68–84 (QGSTGASQPGSSEPSNP). Low complexity-rich tracts occupy residues 85-103 (VSSG…STSS), 183-196 (SNGT…STGT), and 205-235 (SDSS…SSES). A Phosphoserine modification is found at Ser-183. The N-linked (GlcNAc...) asparagine glycan is linked to Asn-184. The tract at residues 216 to 253 (SSSSSSSSSSSSSSSSSSESLPANGPDSPTVKPPRNLQ) is interaction with PTKL. Asn-318 carries an N-linked (GlcNAc...) asparagine glycan. The segment at 373–390 (YKYLSEDIVSKFKEIKAE) is interaction with host VTN. A disulfide bridge connects residues Cys-445 and Cys-497. Thr-549 is modified (phosphothreonine; by CPK1). 5 cysteine pairs are disulfide-bonded: Cys-567–Cys-572, Cys-581–Cys-610, Cys-593–Cys-636, Cys-627–Cys-672, and Cys-755–Cys-809. Positions 579-997 (NNCISNLQVE…TNNECYFCYV (419 aa)) are thiol-protease-like. Residues His-762 and Asn-787 contribute to the active site. N-linked (GlcNAc...) asparagine glycosylation is present at Asn-828. The propeptide at 843 to 886 (KASPEFYHNLYFKNFNVGKKNLFSEKEDNENNKKLGNNYIIFGQ) is inhibition peptide. Ser-866 carries the phosphoserine modification.

This sequence belongs to the peptidase C1 family. May interact (via C-terminus) with PTKL (via SAM domain). As to quaternary structure, interacts (via C-terminus) with human VTN (via hemopexin repeat 2); may form heterotetramers of two VTN and SERA5 P47 heterodimers; the interaction may protect merozoites from phagocytosis by host monocytes; VTN glycosylation appears to be dispensable for the interaction. In terms of assembly, monomer. Interacts with kinase CPK1/CDPK1 at the schizont stage. Phosphorylation by CPK1/CDPK1 increases SERA5 protease activity towards a synthetic peptide in vitro. In terms of processing, just prior to merozoite egress from host erythrocytes, proteolytically cleaved into multiple fragments. Cleaved by SUB1 into p47 and p73, p73 is further cleaved by SUB1 into p56 and p18 and p56 is further processed into p50 by an unidentified protease. p47 remains covalently associated with p18 via disulfide bond. p47 can be processed into p25n and p25c by SUB1. p25c and p25n remain associated with p18. Proteolytic processing is essential for merozoite egress from host erythrocytes. The cleavage of the propeptide to produce p50 is necessary for protease activity and to promote merozoite egress.

Its subcellular location is the parasitophorous vacuole. The protein resides in the secreted. It is found in the cell membrane. Functionally, plays an essential role during the asexual blood stage development by controlling the kinetics of merozoite egress from host erythrocytes. Specifically, prevents premature rupture of the parasitophorous vacuole and host erythrocyte membranes. May prevent merozoite phagocytosis by host monocytes via interaction with host VTN at the merozoite surface. Plays a role in parasite growth. Its function is as follows. Protease activity is controversial. Has been shown in a number of studies to have protease activity towards a synthetic peptide in vitro. Has also been shown to lack protease activity towards a synthetic peptide in vitro. This Plasmodium falciparum (isolate 3D7) protein is Serine-repeat antigen protein 5.